The sequence spans 245 residues: tRNA pseudouridine synthase A (245 aa).

Asp-52 serves as the catalytic Nucleophile. Tyr-112 contacts substrate.

This sequence belongs to the tRNA pseudouridine synthase TruA family. In terms of assembly, homodimer.

It carries out the reaction uridine(38/39/40) in tRNA = pseudouridine(38/39/40) in tRNA. In terms of biological role, formation of pseudouridine at positions 38, 39 and 40 in the anticodon stem and loop of transfer RNAs. In Dictyoglomus thermophilum (strain ATCC 35947 / DSM 3960 / H-6-12), this protein is tRNA pseudouridine synthase A.